A 266-amino-acid chain; its full sequence is Putative zinc finger protein 034R (266 aa).

The disordered stretch occupies residues 84-176; that stretch reads SPTKSVDKAA…GPKRDSTQQP (93 aa). Positions 88-100 are enriched in basic and acidic residues; it reads SVDKAAQKEKKMP. Composition is skewed to polar residues over residues 105–119 and 160–176; these read KPTT…QGIL and GVSQ…TQQP. Residues 180-192 form a C3H1-type zinc finger; it reads CKSVLKQAKCYFG.

The protein belongs to the IIV-6 077L family.

The chain is Putative zinc finger protein 034R from Aedes vexans (Inland floodwater mosquito).